Consider the following 214-residue polypeptide: Orotate phosphoribosyltransferase (214 aa).

Lysine 26 serves as a coordination point for 5-phospho-alpha-D-ribose 1-diphosphate. Position 34–35 (34–35 (FF)) interacts with orotate. 5-phospho-alpha-D-ribose 1-diphosphate-binding positions include 72-73 (YK), arginine 98, lysine 99, lysine 102, histidine 104, and 123-131 (DDVISAGTS). Orotate is bound by residues serine 127 and arginine 155.

This sequence belongs to the purine/pyrimidine phosphoribosyltransferase family. PyrE subfamily. As to quaternary structure, homodimer. Requires Mg(2+) as cofactor.

The enzyme catalyses orotidine 5'-phosphate + diphosphate = orotate + 5-phospho-alpha-D-ribose 1-diphosphate. The protein operates within pyrimidine metabolism; UMP biosynthesis via de novo pathway; UMP from orotate: step 1/2. Its function is as follows. Catalyzes the transfer of a ribosyl phosphate group from 5-phosphoribose 1-diphosphate to orotate, leading to the formation of orotidine monophosphate (OMP). The polypeptide is Orotate phosphoribosyltransferase (Chromobacterium violaceum (strain ATCC 12472 / DSM 30191 / JCM 1249 / CCUG 213 / NBRC 12614 / NCIMB 9131 / NCTC 9757 / MK)).